A 763-amino-acid polypeptide reads, in one-letter code: Eukaryotic translation initiation factor 3 subunit B (763 aa).

A sufficient for interaction with HCR1 and TIF32 region spans residues 1 to 136; it reads MKNFLPRTLK…LFVECGSMND (136 aa). The interval 28–261 is sufficient for interaction with PIC8; the sequence is RNTQLKRSKI…GVTAWGGPNF (234 aa). Residue serine 61 is modified to Phosphoserine. Position 67 is a phosphotyrosine (tyrosine 67). Residues 77-162 form the RRM domain; that stretch reads QYIVVNGAPV…HRLFLYTMKD (86 aa). 6 WD repeats span residues 228 to 266, 277 to 325, 373 to 416, 484 to 524, 544 to 589, and 605 to 650; these read RENW…RLRR, VSPN…LMAT, LKPS…SACT, ELKD…IRFY, IPKT…EKNI, and PTYS…VKED. Residue serine 669 is modified to Phosphoserine.

This sequence belongs to the eIF-3 subunit B family. As to quaternary structure, the eukaryotic translation initiation factor 3 (eIF-3) core complex is composed of TIF32, PRT1, NIP1, TIF34 and TIF35. A subcomplex of TIF32, NIP1 and PRT1 mediates the interaction with eIF-1, TIF5/eIF-5 and HCR1. The factors eIF-1, eIF-2, eIF-3, TIF5/eIF-5 and methionyl-tRNAi form a multifactor complex (MFC) that may bind to the 40S ribosome.

The protein localises to the cytoplasm. RNA-binding component of the eukaryotic translation initiation factor 3 (eIF-3) complex, which is involved in protein synthesis of a specialized repertoire of mRNAs and, together with other initiation factors, stimulates binding of mRNA and methionyl-tRNAi to the 40S ribosome. The eIF-3 complex specifically targets and initiates translation of a subset of mRNAs involved in cell proliferation. This chain is Eukaryotic translation initiation factor 3 subunit B, found in Saccharomyces cerevisiae (strain ATCC 204508 / S288c) (Baker's yeast).